The primary structure comprises 467 residues: Sexual differentiation process putative subtilase-type proteinase isp6 (467 aa).

Residues 86 to 176 form the Inhibitor I9 domain; that stretch reads YIIVLQPDLS…AVERDQVVSI (91 aa). The Peptidase S8 domain maps to 186 to 467; that stretch reads PWGLARISHK…NLLAFNGAQE (282 aa). Residues aspartate 221, histidine 253, and serine 409 each act as charge relay system in the active site.

It belongs to the peptidase S8 family.

The sequence is that of Sexual differentiation process putative subtilase-type proteinase isp6 (isp6) from Schizosaccharomyces pombe (strain 972 / ATCC 24843) (Fission yeast).